Consider the following 504-residue polypeptide: Lysine--tRNA ligase (504 aa).

Residues glutamate 414 and glutamate 421 each coordinate Mg(2+).

Belongs to the class-II aminoacyl-tRNA synthetase family. In terms of assembly, homodimer. Mg(2+) is required as a cofactor.

It localises to the cytoplasm. The catalysed reaction is tRNA(Lys) + L-lysine + ATP = L-lysyl-tRNA(Lys) + AMP + diphosphate. The chain is Lysine--tRNA ligase from Photorhabdus laumondii subsp. laumondii (strain DSM 15139 / CIP 105565 / TT01) (Photorhabdus luminescens subsp. laumondii).